Consider the following 158-residue polypeptide: S-ribosylhomocysteine lyase (158 aa).

Fe cation-binding residues include histidine 56, histidine 60, and cysteine 125.

It belongs to the LuxS family. Homodimer. It depends on Fe cation as a cofactor.

It catalyses the reaction S-(5-deoxy-D-ribos-5-yl)-L-homocysteine = (S)-4,5-dihydroxypentane-2,3-dione + L-homocysteine. In terms of biological role, involved in the synthesis of autoinducer 2 (AI-2) which is secreted by bacteria and is used to communicate both the cell density and the metabolic potential of the environment. The regulation of gene expression in response to changes in cell density is called quorum sensing. Catalyzes the transformation of S-ribosylhomocysteine (RHC) to homocysteine (HC) and 4,5-dihydroxy-2,3-pentadione (DPD). The sequence is that of S-ribosylhomocysteine lyase from Leuconostoc citreum (strain KM20).